The primary structure comprises 1643 residues: Lysine-specific demethylase 6B (1643 aa).

Disordered stretches follow at residues 52–88, 190–680, 704–807, and 822–1096; these read GQPP…PLHG, AKRG…PLED, ESIR…LKSL, and GAAV…RSLS. Low complexity-rich tracts occupy residues 63 to 74 and 212 to 223; these read SHGSSSGHPSKP and AALSGPSGEEGL. The residue at position 224 (serine 224) is a Phosphoserine. Residues 242 to 266 show a composition bias toward pro residues; sequence PGLPLPPPPLPPPPPPPPPPPPPLP. Positions 291-307 are enriched in basic and acidic residues; that stretch reads GPERKGSAPPERQEQRH. Over residues 332–342 the composition is skewed to pro residues; sequence AAPPGPGPRPP. The segment covering 359 to 370 has biased composition (basic and acidic residues); the sequence is DLRESRVQRSRM. The segment covering 394–412 has biased composition (low complexity); it reads PGTTTSSSSSSSSNTGLRG. A compositionally biased stretch (pro residues) spans 460 to 484; it reads SLPPGPSSPPPPPCPRLLRPPPPPA. Low complexity predominate over residues 550-569; it reads TTSSSNSNSGSHSSSPAGPV. Composition is skewed to pro residues over residues 584–600 and 641–658; these read LPRP…PPLV and GPGP…PVPP. The segment covering 704–714 has biased composition (basic and acidic residues); that stretch reads ESIRKEEEQQQ. Residues 740 to 764 show a composition bias toward low complexity; it reads TAPTTTAPAVAVTTTTTTTTTTTAT. Residues 772–800 are compositionally biased toward pro residues; that stretch reads PPALPPPPPLAKFPPPSQPQPPPPPPPSP. Residues 843–877 show a composition bias toward low complexity; it reads SGATALPPTSAAPSAQGSPQPSASSSSQFSTSGGP. Residues 889–904 show a composition bias toward pro residues; sequence VPGPMTPTQPPPPLSL. Positions 916-929 are enriched in basic and acidic residues; sequence EISRACETLVERVG. Positions 972-989 are enriched in basic residues; sequence CKRRQKEHQKEHRRHRRA. The span at 990 to 1003 shows a compositional bias: basic and acidic residues; that stretch reads CKDSVGRRPREGRA. Residues 1004–1016 show a composition bias toward basic residues; that stretch reads KAKAKVPKEKSRR. Over residues 1047–1067 the composition is skewed to pro residues; that stretch reads PTAPAPPSAPAPSAQPTPPSA. A Glycyl lysine isopeptide (Lys-Gly) (interchain with G-Cter in SUMO2) cross-link involves residue lysine 1109. Residues 1288-1325 are disordered; sequence FQESLQEEKESEDEESEEPDSTTGTPPSSAPDPKNHHI. A compositionally biased stretch (acidic residues) spans 1296 to 1307; that stretch reads KESEDEESEEPD. One can recognise a JmjC domain in the interval 1339 to 1502; it reads RWKPQLQELL…YQLALERYEW (164 aa). 3 residues coordinate Fe cation: histidine 1390, glutamate 1392, and histidine 1470. Zn(2+) contacts are provided by cysteine 1575, cysteine 1578, cysteine 1602, and cysteine 1605.

It belongs to the UTX family. Interacts with TLE1. Component of the MLL4 complex, at least composed of KMT2B/MLL4, ASH2L, RBBP5, WDR5, and KDM6B. Interacts with TBX21, SMARCA4, SMARCC1 and SMARCC2. It depends on L-ascorbate as a cofactor. Fe(2+) is required as a cofactor.

The protein resides in the nucleus. It carries out the reaction N(6),N(6),N(6)-trimethyl-L-lysyl(27)-[histone H3] + 2 2-oxoglutarate + 2 O2 = N(6)-methyl-L-lysyl(27)-[histone H3] + 2 formaldehyde + 2 succinate + 2 CO2. Functionally, histone demethylase that specifically demethylates 'Lys-27' of histone H3, thereby playing a central role in histone code. Demethylates trimethylated and dimethylated H3 'Lys-27'. Plays a central role in regulation of posterior development, by regulating HOX gene expression. Involved in inflammatory response by participating in macrophage differentiation in case of inflammation by regulating gene expression and macrophage differentiation. Plays a demethylase-independent role in chromatin remodeling to regulate T-box family member-dependent gene expression by acting as a link between T-box factors and the SMARCA4-containing SWI/SNF remodeling complex. This is Lysine-specific demethylase 6B (KDM6B) from Homo sapiens (Human).